Consider the following 167-residue polypeptide: Leptin (167 aa).

A signal peptide spans 1-21; sequence MRCGPLCRFLWLWPYLSYIEA. Cys-117 and Cys-167 are disulfide-bonded.

Belongs to the leptin family.

Its subcellular location is the secreted. Its function is as follows. Key player in the regulation of energy balance and body weight control. Once released into the circulation, has central and peripheral effects by binding LEPR, found in many tissues, which results in the activation of several major signaling pathways. In the hypothalamus, acts as an appetite-regulating factor that induces a decrease in food intake and an increase in energy consumption by inducing anorexinogenic factors and suppressing orexigenic neuropeptides, also regulates bone mass and secretion of hypothalamo-pituitary-adrenal hormones. In the periphery, increases basal metabolism, influences reproductive function, regulates pancreatic beta-cell function and insulin secretion, is pro-angiogenic for endothelial cell and affects innate and adaptive immunity. In the arcuate nucleus of the hypothalamus, activates by depolarization POMC neurons inducing FOS and SOCS3 expression to release anorexigenic peptides and inhibits by hyperpolarization NPY neurons inducing SOCS3 with a consequent reduction on release of orexigenic peptides. In addition to its known satiety inducing effect, has a modulatory role in nutrient absorption. In the intestine, reduces glucose absorption by enterocytes by activating PKC and leading to a sequential activation of p38, PI3K and ERK signaling pathways which exerts an inhibitory effect on glucose absorption. Acts as a growth factor on certain tissues, through the activation of different signaling pathways increases expression of genes involved in cell cycle regulation such as CCND1, via JAK2-STAT3 pathway, or VEGFA, via MAPK1/3 and PI3K-AKT1 pathways. May also play an apoptotic role via JAK2-STAT3 pathway and up-regulation of BIRC5 expression. Pro-angiogenic, has mitogenic activity on vascular endothelial cells and plays a role in matrix remodeling by regulating the expression of matrix metalloproteinases (MMPs) and tissue inhibitors of metalloproteinases (TIMPs). In innate immunity, modulates the activity and function of neutrophils by increasing chemotaxis and the secretion of oxygen radicals. Increases phagocytosis by macrophages and enhances secretion of pro-inflammatory mediators. Increases cytotoxic ability of NK cells. Plays a pro-inflammatory role, in synergy with IL1B, by inducing NOS2 which promotes the production of IL6, IL8 and Prostaglandin E2, through a signaling pathway that involves JAK2, PI3K, MAP2K1/MEK1 and MAPK14/p38. In adaptive immunity, promotes the switch of memory T-cells towards T helper-1 cell immune responses. Increases CD4(+)CD25(-) T-cell proliferation and reduces autophagy during TCR (T-cell receptor) stimulation, through MTOR signaling pathway activation and BCL2 up-regulation. The chain is Leptin (LEP) from Ursus thibetanus (Asiatic black bear).